Reading from the N-terminus, the 66-residue chain is Small vasohibin-binding protein (66 aa).

A compositionally biased stretch (basic and acidic residues) spans Met1–Lys23. Residues Met1–Leu31 form a disordered region. Positions Ala5–Gln52 form a coiled coil.

This sequence belongs to the SVBP family. As to quaternary structure, interacts with VASH1 and VASH2.

The protein resides in the cytoplasm. Its subcellular location is the secreted. The protein localises to the cytoskeleton. In terms of biological role, enhances the tyrosine carboxypeptidase activity of VASH1 and VASH2, thereby promoting the removal of the C-terminal tyrosine residue of alpha-tubulin. This activity is critical for spindle function and accurate chromosome segregation during mitosis since microtubule detyronisation regulates mitotic spindle length and postioning. Also required to enhance the solubility and secretion of VASH1 and VASH2. Plays a role in axon and excitatory synapse formation. This is Small vasohibin-binding protein from Homo sapiens (Human).